The chain runs to 471 residues: 5-hydroxytryptamine receptor 2A (471 aa).

At 1 to 80 the chain is on the extracellular side; sequence MDILCEENTS…LQEKNWSALL (80 aa). Asn-8, Asn-38, Asn-44, Asn-51, and Asn-54 each carry an N-linked (GlcNAc...) asparagine glycan. Residues 81–97 form a helical membrane-spanning segment; that stretch reads TAVVIILTIAGNILVIM. Topologically, residues 98–111 are cytoplasmic; sequence AVSLEKKLQNATNY. The chain crosses the membrane as a helical span at residues 112 to 137; that stretch reads FLMSLAIADMLLGFLVMPVSMLTILY. The Extracellular segment spans residues 138–146; that stretch reads GYRWPLPSK. Residues 147 to 171 form a helical membrane-spanning segment; the sequence is LCAVWIYLDVLFSTASIMHLCAISL. Cys-148 and Cys-227 are joined by a disulfide. Position 155 (Asp-155) interacts with serotonin. Positions 172 to 174 match the DRY motif; important for ligand-induced conformation changes motif; that stretch reads DRY. At 172 to 191 the chain is on the cytoplasmic side; it reads DRYVAIQNPIHHSRFNSRTK. The chain crosses the membrane as a helical span at residues 192–215; the sequence is AFLKIIAVWTISVGISMPIPVFGL. The Extracellular portion of the chain corresponds to 216-232; the sequence is QDDSKVFKEGSCLLADD. A helical transmembrane segment spans residues 233–258; sequence NFVLIGSFVSFFIPLTIMVITYFLTI. Topologically, residues 259–322 are cytoplasmic; that stretch reads KSLQKEATLC…QSISNEQKAC (64 aa). Phosphoserine is present on Ser-280. Residues 323-348 traverse the membrane as a helical segment; it reads KVLGIVFFLFVVMWCPFFITNIMAVI. Serotonin is bound at residue Asn-343. Cys-349 and Cys-353 form a disulfide bridge. At 349 to 356 the chain is on the extracellular side; sequence CKESCNED. Residues 357–382 traverse the membrane as a helical segment; sequence VIGALLNVFVWIGYLSSAVNPLVYTL. Positions 376–380 match the NPxxY motif; important for ligand-induced conformation changes and signaling motif; the sequence is NPLVY. At 383-471 the chain is on the cytoplasmic side; sequence FNKTYRSAFS…DGVNEKVSCV (89 aa). A compositionally biased stretch (basic and acidic residues) spans 451 to 465; the sequence is QHSEEASKDNSDGVN. Residues 451–471 form a disordered region; that stretch reads QHSEEASKDNSDGVNEKVSCV. Positions 469–471 match the PDZ-binding motif; that stretch reads SCV.

Belongs to the G-protein coupled receptor 1 family. Interacts (via C-terminus) with MPDZ and PATJ. May interact (via C-terminus) with MPP3, PRDX6, DLG4, DLG1, CASK, APBA1 and MAGI2. Interacts with GRM2 and DRD2; this may affect signaling. In terms of tissue distribution, detected in brain cortex (at protein level). Detected in blood platelets.

It localises to the cell membrane. It is found in the cell projection. The protein localises to the dendrite. The protein resides in the axon. Its subcellular location is the cytoplasmic vesicle. It localises to the membrane. It is found in the caveola. The protein localises to the presynapse. With respect to regulation, G-protein coupled receptor activity is regulated by lipids: oleamide increases HTR2A-mediated activity. Inhibited by IHCH-7179 small molecule: IHCH-7179 acts both as an agonist activator for HTR1A and as an antagonist inhibitor for HTR2A. Its function is as follows. G-protein coupled receptor for 5-hydroxytryptamine (serotonin). Also functions as a receptor for various drugs and psychoactive substances, including mescaline, psilocybin, 1-(2,5-dimethoxy-4-iodophenyl)-2-aminopropane (DOI) and lysergic acid diethylamide (LSD). Ligand binding causes a conformation change that triggers signaling via guanine nucleotide-binding proteins (G proteins) and modulates the activity of downstream effectors. HTR2A is coupled to G(q)/G(11) G alpha proteins and activates phospholipase C-beta, releasing diacylglycerol (DAG) and inositol 1,4,5-trisphosphate (IP3) second messengers that modulate the activity of phosphatidylinositol 3-kinase and promote the release of Ca(2+) ions from intracellular stores, respectively. Beta-arrestin family members inhibit signaling via G proteins and mediate activation of alternative signaling pathways. Affects neural activity, perception, cognition and mood. Plays a role in the regulation of behavior, including responses to anxiogenic situations and psychoactive substances. Plays a role in intestinal smooth muscle contraction, and may play a role in arterial vasoconstriction. (Microbial infection) Acts as a receptor for human JC polyomavirus/JCPyV. This chain is 5-hydroxytryptamine receptor 2A, found in Homo sapiens (Human).